We begin with the raw amino-acid sequence, 91 residues long: DNA-directed RNA polymerase subunit omega (91 aa).

This sequence belongs to the RNA polymerase subunit omega family. The RNAP catalytic core consists of 2 alpha, 1 beta, 1 beta' and 1 omega subunit. When a sigma factor is associated with the core the holoenzyme is formed, which can initiate transcription.

It carries out the reaction RNA(n) + a ribonucleoside 5'-triphosphate = RNA(n+1) + diphosphate. Its function is as follows. Promotes RNA polymerase assembly. Latches the N- and C-terminal regions of the beta' subunit thereby facilitating its interaction with the beta and alpha subunits. This chain is DNA-directed RNA polymerase subunit omega, found in Actinobacillus pleuropneumoniae serotype 5b (strain L20).